The chain runs to 415 residues: Serine hydroxymethyltransferase 2 (415 aa).

Residues Leu-121 and 125–127 (GHL) contribute to the (6S)-5,6,7,8-tetrahydrofolate site. An N6-(pyridoxal phosphate)lysine modification is found at Lys-229.

The protein belongs to the SHMT family. Homodimer. Requires pyridoxal 5'-phosphate as cofactor.

Its subcellular location is the cytoplasm. It catalyses the reaction (6R)-5,10-methylene-5,6,7,8-tetrahydrofolate + glycine + H2O = (6S)-5,6,7,8-tetrahydrofolate + L-serine. Its pathway is one-carbon metabolism; tetrahydrofolate interconversion. It participates in amino-acid biosynthesis; glycine biosynthesis; glycine from L-serine: step 1/1. In terms of biological role, catalyzes the reversible interconversion of serine and glycine with tetrahydrofolate (THF) serving as the one-carbon carrier. This reaction serves as the major source of one-carbon groups required for the biosynthesis of purines, thymidylate, methionine, and other important biomolecules. Also exhibits THF-independent aldolase activity toward beta-hydroxyamino acids, producing glycine and aldehydes, via a retro-aldol mechanism. This Bordetella parapertussis (strain 12822 / ATCC BAA-587 / NCTC 13253) protein is Serine hydroxymethyltransferase 2.